The chain runs to 450 residues: UDP-N-acetylmuramoylalanine--D-glutamate ligase (450 aa).

Residue Gly115 to Thr121 participates in ATP binding.

This sequence belongs to the MurCDEF family.

Its subcellular location is the cytoplasm. The enzyme catalyses UDP-N-acetyl-alpha-D-muramoyl-L-alanine + D-glutamate + ATP = UDP-N-acetyl-alpha-D-muramoyl-L-alanyl-D-glutamate + ADP + phosphate + H(+). Its pathway is cell wall biogenesis; peptidoglycan biosynthesis. Cell wall formation. Catalyzes the addition of glutamate to the nucleotide precursor UDP-N-acetylmuramoyl-L-alanine (UMA). The protein is UDP-N-acetylmuramoylalanine--D-glutamate ligase of Desulfatibacillum aliphaticivorans.